The sequence spans 231 residues: Urease accessory protein UreF (231 aa).

The protein belongs to the UreF family. As to quaternary structure, ureD, UreF and UreG form a complex that acts as a GTP-hydrolysis-dependent molecular chaperone, activating the urease apoprotein by helping to assemble the nickel containing metallocenter of UreC. The UreE protein probably delivers the nickel.

Its subcellular location is the cytoplasm. Its function is as follows. Required for maturation of urease via the functional incorporation of the urease nickel metallocenter. The chain is Urease accessory protein UreF from Magnetococcus marinus (strain ATCC BAA-1437 / JCM 17883 / MC-1).